The following is a 308-amino-acid chain: Ribosomal RNA large subunit methyltransferase F (308 aa).

Belongs to the methyltransferase superfamily. METTL16/RlmF family.

It localises to the cytoplasm. The catalysed reaction is adenosine(1618) in 23S rRNA + S-adenosyl-L-methionine = N(6)-methyladenosine(1618) in 23S rRNA + S-adenosyl-L-homocysteine + H(+). Functionally, specifically methylates the adenine in position 1618 of 23S rRNA. The polypeptide is Ribosomal RNA large subunit methyltransferase F (Shigella flexneri serotype 5b (strain 8401)).